Consider the following 394-residue polypeptide: Elongation factor Tu (394 aa).

The tr-type G domain maps to 10 to 204 (KPHVNVGTIG…ALDSYIPEPE (195 aa)). Residues 19-26 (GHVDHGKT) form a G1 region. 19 to 26 (GHVDHGKT) contacts GTP. Residue T26 participates in Mg(2+) binding. The tract at residues 60-64 (GITIN) is G2. The interval 81–84 (DCPG) is G3. GTP-binding positions include 81 to 85 (DCPGH) and 136 to 139 (NKCD). A G4 region spans residues 136-139 (NKCD). The segment at 174–176 (SAL) is G5.

This sequence belongs to the TRAFAC class translation factor GTPase superfamily. Classic translation factor GTPase family. EF-Tu/EF-1A subfamily. As to quaternary structure, monomer.

Its subcellular location is the cytoplasm. It carries out the reaction GTP + H2O = GDP + phosphate + H(+). In terms of biological role, GTP hydrolase that promotes the GTP-dependent binding of aminoacyl-tRNA to the A-site of ribosomes during protein biosynthesis. In Sodalis glossinidius (strain morsitans), this protein is Elongation factor Tu.